The primary structure comprises 219 residues: RNA chaperone ProQ (219 aa).

The interval 102 to 160 (TLKESQDKAKAKRAERSKDEGDAADKAPRKPKRKPQPQARRDAKPAAKDKPKAAPKAPA) is disordered. 2 stretches are compositionally biased toward basic and acidic residues: residues 105-129 (ESQD…DKAP) and 140-153 (ARRD…DKPK).

The protein belongs to the ProQ family.

The protein resides in the cytoplasm. Functionally, RNA chaperone with significant RNA binding, RNA strand exchange and RNA duplexing activities. The sequence is that of RNA chaperone ProQ from Shewanella amazonensis (strain ATCC BAA-1098 / SB2B).